The primary structure comprises 852 residues: Potassium voltage-gated channel subfamily KQT member 2 (852 aa).

Topologically, residues 1-90 are cytoplasmic; that stretch reads MVQKSRNGGV…LYNVLERPRG (90 aa). A Phosphoserine; by PKA modification is found at Ser-52. A helical transmembrane segment spans residues 91–113; it reads WAFIYHAYVFLLVFSCLVLSVFS. Residues 114 to 123 are Extracellular-facing; the sequence is TIKEYEKSSE. A helical transmembrane segment spans residues 124–145; the sequence is GALYILEIVTIVVFGVEYFVRI. Residues 146–163 are Cytoplasmic-facing; the sequence is WAAGCCCRYRGWRGRLKF. The helical transmembrane segment at 164-183 threads the bilayer; that stretch reads ARKPFCVIDIMVLIASIAVL. Topologically, residues 184 to 196 are extracellular; it reads AAGSQGNVFATSA. The helical; Voltage-sensor transmembrane segment at 197–215 threads the bilayer; the sequence is LRSLRFLQILRMIRMDRRG. A 1,2-diacyl-sn-glycero-3-phospho-(1D-myo-inositol-4,5-bisphosphate) is bound at residue Arg-214. The Cytoplasmic segment spans residues 216–227; the sequence is GTWKLLGSVVYA. A mediates interaction with SLC5A3 region spans residues 222 to 323; sequence GSVVYAHSKE…SGFALKVQEQ (102 aa). Residues 228–253 form a helical membrane-spanning segment; sequence HSKELVTAWYIGFLCLILASFLVYLA. Lys-230 provides a ligand contact to a 1,2-diacyl-sn-glycero-3-phospho-(1D-myo-inositol-4,5-bisphosphate). Residues 254–263 lie on the Extracellular side of the membrane; sequence EKGENDHFDT. Positions 264–276 form an intramembrane region, pore-forming; it reads YADALWWGLITLT. Residues 277–282 carry the Selectivity filter motif; that stretch reads TIGYGD. The Extracellular segment spans residues 277-287; that stretch reads TIGYGDKYPQT. The helical transmembrane segment at 288–314 threads the bilayer; the sequence is WNGRLLAATFTLIGVSFFALPAGILGS. Residues 315–852 are Cytoplasmic-facing; it reads GFALKVQEQH…GDVAWAGPRK (538 aa). Residues 317-522 form a mediates interaction with calmodulin region; the sequence is ALKVQEQHRQ…EDLTPGLKVS (206 aa). Lys-327 is an a 1,2-diacyl-sn-glycero-3-phospho-(1D-myo-inositol-4,5-bisphosphate) binding site. The disordered stretch occupies residues 404-469; sequence TFRKEPQPEP…SKVPKSWSFG (66 aa). Polar residues predominate over residues 440–457; that stretch reads PQAQTVRRSPSADQSLDD. 6 positions are modified to phosphoserine: Ser-448, Ser-450, Ser-454, Ser-458, Ser-460, and Ser-489. Disordered stretches follow at residues 579–601, 643–662, and 672–718; these read GPTITDKDRTKGPAETELPEDPS, GAKEPEPAPPYHSPEDSRDH, and IVRS…DHGS. A compositionally biased stretch (basic and acidic residues) spans 583 to 592; it reads TDKDRTKGPA. Ser-655 carries the phosphoserine modification. Phosphoserine is present on residues Ser-781 and Ser-783. A disordered region spans residues 818–852; it reads ESDTDSDLCTPCGPPPRSATGEGPFGDVAWAGPRK.

The protein belongs to the potassium channel family. KQT (TC 1.A.1.15) subfamily. Kv7.2/KCNQ2 sub-subfamily. Heterotetramer with KCNQ3; forms heterotetrameric M-channel responsible for the M-current. Homotetrameric; forms a functional homotetrameric channel resulting in the expression of a small M-current. Interacts with calmodulin; the interaction is calcium-independent, constitutive and participates in the proper assembly of a functional M-channel. May associate with KCNE2. Interacts with IQCJ-SCHIP1. Interacts (via the pore module) with SLC5A3/SMIT1; forms a coregulatory complex that alters ion selectivity, voltage dependence and gating kinetics of the channel. Interacts with AKAP5; the interaction may help KCNQ2 channel complex to retain calcium-bound calmodulin. KCNQ2/KCNQ3 heteromeric current can be increased by intracellular cyclic AMP, an effect that depends on phosphorylation of Ser-52 in the N-terminal region. Post-translationally, KCNQ2/KCNQ3 are ubiquitinated by NEDD4L. Ubiquitination leads to protein degradation. Degradation induced by NEDD4L is inhibited by USP36. Expressed in brain and sympathetic ganglia. In brain, expressed in cortex, hippocampus, and cerebellum. In sympathetic ganglia, expressed at lower levels in celiac ganglia and superior mesenteric ganglia than in superior cervical ganglia.

It is found in the cell membrane. It catalyses the reaction K(+)(in) = K(+)(out). The catalysed reaction is Rb(+)(in) = Rb(+)(out). The enzyme catalyses Cs(+)(in) = Cs(+)(out). It carries out the reaction Na(+)(in) = Na(+)(out). Phosphatidylinositol-4,5-bisphosphate (PIP2) potentiates the activation of KCNQ channels by enhancing the electro-mechanical coupling of the voltage-sensing domain (VSD) and the pore-forming domain (PD). In the closed state of the channel, PIP2 is anchored at the S2-S3 loop; upon channel activation, PIP2 interacts with the S4-S5 linker and is involved in channel gating. Calcium suppresses KCNQ2 and KCNQ2-KCNQ3 channel currents, with calcium-bound calmodulin inducing a change in channel configuration which leads to the reduction of channel affinity for PIP2 and subsequent current suppression. Its function is as follows. Pore-forming subunit of the voltage-gated potassium (Kv) M-channel which is responsible for the M-current, a key controller of neuronal excitability. M-channel is composed of pore-forming subunits KCNQ2 and KCNQ3 assembled as heterotetramers. The native M-current has a slowly activating and deactivating potassium conductance which plays a critical role in determining the subthreshold electrical excitability of neurons as well as the responsiveness to synaptic inputs. M-channel is selectively permeable in vitro to other cations besides potassium, in decreasing order of affinity K(+) &gt; Rb(+) &gt; Cs(+) &gt; Na(+). M-channel association with SLC5A3/SMIT1 alters channel ion selectivity, increasing Na(+) and Cs(+) permeation relative to K(+). Suppressed by activation of the muscarinic acetylcholine receptor CHRM1. The chain is Potassium voltage-gated channel subfamily KQT member 2 from Rattus norvegicus (Rat).